We begin with the raw amino-acid sequence, 838 residues long: Outer membrane usher protein YraJ (838 aa).

The first 40 residues, Met1–Ala40, serve as a signal peptide directing secretion. Cysteines 815 and 837 form a disulfide.

The protein belongs to the fimbrial export usher family.

It is found in the cell outer membrane. Functionally, part of the yraHIJK fimbrial operon. Could contribute to adhesion to various surfaces in specific environmental niches. Increases adhesion to eukaryotic T24 bladder epithelial cells in the absence of fim operon. Probably involved in the export and assembly of fimbrial subunits across the outer membrane. The sequence is that of Outer membrane usher protein YraJ (yraJ) from Escherichia coli (strain K12).